The sequence spans 539 residues: Sodium/hydrogen exchanger 9B2 (539 aa).

Residues 1-94 (MEDSLFSVDK…ACPPQGCFSL (94 aa)) lie on the Cytoplasmic side of the membrane. The helical transmembrane segment at 95–112 (AITNVTMVILIWAVVWSI) threads the bilayer. Over 113 to 121 (TGPECLPGG) the chain is Extracellular. The chain crosses the membrane as a helical span at residues 122–141 (NLFGILALLFSAALGGKLIS). Residues 142-152 (LIKIPSLPPLP) are Cytoplasmic-facing. Residues 153-169 (PLLGMLLAGFLIRNIPV) form a helical membrane-spanning segment. The Extracellular segment spans residues 170-179 (ITDQVQIHHK). A helical transmembrane segment spans residues 180-197 (WSAALRNIALAIILVRAG). Topologically, residues 198-208 (LGLDPKALRKL) are cytoplasmic. The helical transmembrane segment at 209–235 (KAVCLRLSFGPCVVESCTAAVVSHFIM) threads the bilayer. Residues 236-241 (GFPLTW) are Extracellular-facing. The chain crosses the membrane as a helical span at residues 242 to 250 (GFMLGFVLG). Over 251–278 (AVSPAVVVPSMLILQKEGFGVDKGIPTL) the chain is Cytoplasmic. Na(+) contacts are provided by Val-252, Gly-283, Asp-286, and Asp-287. A helical membrane pass occupies residues 279–298 (LMAAGSFDDVLAITGFNTCL). The Extracellular segment spans residues 299-308 (GMAFSSGSTL). The chain crosses the membrane as a helical span at residues 309–332 (NTIVRGVLEVVVGIAAGLLFGFFL). The Cytoplasmic portion of the chain corresponds to 333–347 (HYFPSKDQENLKGKR). A helical transmembrane segment spans residues 348–365 (SYLILALSVFAVFGSLYF). Residues 366–369 (GFPG) lie on the Extracellular side of the membrane. A helical membrane pass occupies residues 370 to 381 (SGGLCTLVMAFL). Over 382-398 (AGIGWSTDKTVVEDIIA) the chain is Cytoplasmic. The chain crosses the membrane as a helical span at residues 399–419 (VSWDIFQPLLFGLIGAEISVA). At 420 to 425 (SLKPET) the chain is on the extracellular side. A helical transmembrane segment spans residues 426 to 448 (VGLCTATLIIALIIRICISFLMV). Residues 449-469 (CFSGFSLKEKIFISLAWMPKA) are Cytoplasmic-facing. A helical transmembrane segment spans residues 470–481 (TVQAAIGSVALD). The Extracellular portion of the chain corresponds to 482–494 (TARTLENKQFEDY). Residues 495–517 (GMDVLTVAFLGILVTAPIGALVI) form a helical membrane-spanning segment. The Cytoplasmic segment spans residues 518 to 539 (GLTGPKMLEKSESRTVTEEGSV).

Belongs to the monovalent cation:proton antiporter 1 (CPA1) transporter (TC 2.A.36) family. In terms of assembly, homodimer; dimerization is essential for SLC9B2 activity. Lipids seem to play a role in the stabilization of the dimerization subdomain.

The protein localises to the cell membrane. It is found in the mitochondrion membrane. Its subcellular location is the endosome membrane. It localises to the recycling endosome membrane. The protein resides in the cytoplasmic vesicle. The protein localises to the secretory vesicle. It is found in the synaptic vesicle membrane. Its subcellular location is the basolateral cell membrane. It localises to the apical cell membrane. The enzyme catalyses Li(+)(out) + H(+)(in) = Li(+)(in) + H(+)(out). The catalysed reaction is Li(+)(in) + Na(+)(out) = Li(+)(out) + Na(+)(in). It catalyses the reaction Na(+)(in) + H(+)(out) = Na(+)(out) + H(+)(in). Its activity is regulated as follows. Allosterically inhibited by the N-terminal domain. Inhibited by phloretin. Its function is as follows. Electroneutral Na(+) Li(+)/H(+) antiporter that extrudes Na(+) or Li(+) in exchange for external protons across the membrane. Uses the proton gradient/membrane potential to extrude sodium. Contributes to the regulation of intracellular pH and sodium homeostasis. Also able to mediate Na(+)/Li(+) antiporter activity in kidney. The sequence is that of Sodium/hydrogen exchanger 9B2 (slc9b2) from Xenopus tropicalis (Western clawed frog).